The following is a 69-amino-acid chain: Sperm protamine P1 (69 aa).

The tract at residues 1-69 (MARYRHSRSR…YSRRRRRRYY (69 aa)) is disordered.

Belongs to the protamine P1 family. Testis.

It localises to the nucleus. It is found in the chromosome. Protamines substitute for histones in the chromatin of sperm during the haploid phase of spermatogenesis. They compact sperm DNA into a highly condensed, stable and inactive complex. In Pseudochirops cupreus (Coppery ringtail), this protein is Sperm protamine P1 (PRM1).